Reading from the N-terminus, the 412-residue chain is Gamma-glutamyl phosphate reductase (412 aa).

It belongs to the gamma-glutamyl phosphate reductase family.

It is found in the cytoplasm. The enzyme catalyses L-glutamate 5-semialdehyde + phosphate + NADP(+) = L-glutamyl 5-phosphate + NADPH + H(+). It functions in the pathway amino-acid biosynthesis; L-proline biosynthesis; L-glutamate 5-semialdehyde from L-glutamate: step 2/2. Catalyzes the NADPH-dependent reduction of L-glutamate 5-phosphate into L-glutamate 5-semialdehyde and phosphate. The product spontaneously undergoes cyclization to form 1-pyrroline-5-carboxylate. This chain is Gamma-glutamyl phosphate reductase, found in Bartonella quintana (strain Toulouse) (Rochalimaea quintana).